Consider the following 529-residue polypeptide: Peptide chain release factor 3 (529 aa).

Residues 10–279 form the tr-type G domain; sequence EQRRCFGIIS…ALVEMAPAPG (270 aa). GTP-binding positions include 19–26, 87–91, and 141–144; these read SHPDAGKT, DTPGH, and NKMD.

This sequence belongs to the TRAFAC class translation factor GTPase superfamily. Classic translation factor GTPase family. PrfC subfamily.

The protein resides in the cytoplasm. Functionally, increases the formation of ribosomal termination complexes and stimulates activities of RF-1 and RF-2. It binds guanine nucleotides and has strong preference for UGA stop codons. It may interact directly with the ribosome. The stimulation of RF-1 and RF-2 is significantly reduced by GTP and GDP, but not by GMP. The polypeptide is Peptide chain release factor 3 (Desulfatibacillum aliphaticivorans).